The primary structure comprises 651 residues: Mitogen-activated protein kinase kinase kinase 2 (651 aa).

A Protein kinase domain is found at 68-330; that stretch reads WRKGQLIGRG…ASELLKHPFV (263 aa). ATP is bound by residues 74–82 and Lys-97; that span reads IGRGAFGTV. Residues 105–130 adopt a coiled-coil conformation; sequence CASKEKTQAHIQELEEEVKLLKNLSH. Glycyl lysine isopeptide (Lys-Gly) (interchain with G-Cter in ubiquitin) cross-links involve residues Lys-108 and Lys-110. Asp-196 serves as the catalytic Proton acceptor. Disordered stretches follow at residues 460-483, 537-601, and 618-651; these read GNGE…DENE, RGFL…VALS, and KRRE…SPGK. Over residues 464-477 the composition is skewed to basic and acidic residues; that stretch reads TETKVSMEVDHPSY. The segment covering 570 to 599 has biased composition (polar residues); it reads SPESGNSSGAPKNSNASAGAEQESNSQSVA. The stretch at 605–628 forms a coiled coil; sequence RKWKEELDQELERKRREITRQAGM.

This sequence belongs to the protein kinase superfamily. STE Ser/Thr protein kinase family. MAP kinase kinase kinase subfamily. As to expression, expressed in roots and flowers.

The protein localises to the cytoplasm. It localises to the cytoskeleton. It carries out the reaction L-seryl-[protein] + ATP = O-phospho-L-seryl-[protein] + ADP + H(+). The catalysed reaction is L-threonyl-[protein] + ATP = O-phospho-L-threonyl-[protein] + ADP + H(+). In terms of biological role, involved in cortical microtubules organization and stabilization by regulating the phosphorylation state of microtubule-associated proteins such as MAP65-1. This Arabidopsis thaliana (Mouse-ear cress) protein is Mitogen-activated protein kinase kinase kinase 2 (ANP2).